Here is a 175-residue protein sequence, read N- to C-terminus: MVSLKDSHFDLFHLPAQFALDDAALDDAYRTVQTQVHPDRFAAAGDAQKRIAMQWATRANEAYRTLRDPLQRASYLLSLRGVDIGAENNTAMEPAFLMQQMEWREGIEDAAAARNVDALDALLAELRDEKRVRIERLGTLLDSGADQAAAEAVRQLMFIERVASEVGAQIERLET.

One can recognise a J domain in the interval S7–L79.

Belongs to the HscB family. In terms of assembly, interacts with HscA and stimulates its ATPase activity.

In terms of biological role, co-chaperone involved in the maturation of iron-sulfur cluster-containing proteins. Seems to help targeting proteins to be folded toward HscA. The polypeptide is Co-chaperone protein HscB homolog (Burkholderia vietnamiensis (strain G4 / LMG 22486) (Burkholderia cepacia (strain R1808))).